The following is a 526-amino-acid chain: D-arabinono-1,4-lactone oxidase (526 aa).

The FAD-binding PCMH-type domain maps to 22-196 (FWSRPSLYFQ…VYATLRTVPA (175 aa)). His-59 is subject to Pros-8alpha-FAD histidine.

This sequence belongs to the oxygen-dependent FAD-linked oxidoreductase family. The cofactor is FAD.

It localises to the mitochondrion membrane. The catalysed reaction is D-arabinono-1,4-lactone + O2 = dehydro-D-arabinono-1,4-lactone + H2O2 + H(+). It participates in cofactor biosynthesis; D-erythroascorbate biosynthesis; dehydro-D-arabinono-1,4-lactone from D-arabinose: step 2/2. In Yarrowia lipolytica (strain CLIB 122 / E 150) (Yeast), this protein is D-arabinono-1,4-lactone oxidase (ALO1).